We begin with the raw amino-acid sequence, 305 residues long: Glycine--tRNA ligase alpha subunit (305 aa).

This sequence belongs to the class-II aminoacyl-tRNA synthetase family. As to quaternary structure, tetramer of two alpha and two beta subunits.

It localises to the cytoplasm. It catalyses the reaction tRNA(Gly) + glycine + ATP = glycyl-tRNA(Gly) + AMP + diphosphate. This chain is Glycine--tRNA ligase alpha subunit, found in Streptococcus pneumoniae (strain P1031).